The chain runs to 962 residues: AP2-associated protein kinase 1 (962 aa).

Position 1 is an N-acetylmethionine (methionine 1). Residues 1 to 11 (MKKFFDSRREQ) are compositionally biased toward basic and acidic residues. The interval 1-27 (MKKFFDSRREQGSSGLGSGSSGGGGSS) is disordered. Phosphoserine is present on serine 14. Over residues 14-27 (SGLGSGSSGGGGSS) the composition is skewed to gly residues. The 269-residue stretch at 46–314 (VTVDEVLAEG…QVSYFSFKLL (269 aa)) folds into the Protein kinase domain. ATP-binding positions include 52 to 60 (LAEGGFALV) and lysine 74. Aspartate 176 serves as the catalytic Proton acceptor. Tyrosine 234 bears the Phosphotyrosine mark. Residue serine 235 is modified to Phosphoserine. Disordered stretches follow at residues 325-515 (NSPI…QFQA) and 576-633 (PQAQ…RAGH). A phosphothreonine mark is found at threonine 353 and threonine 388. At arginine 390 the chain carries Omega-N-methylarginine. Polar residues predominate over residues 397–418 (PLPQATGPSNQPSLLASVSQPK). Low complexity predominate over residues 419–434 (AQATPSQPLQSSQPKQ). Positions 435–444 (PQAPPTPQQT) are enriched in pro residues. Residue threonine 440 is modified to Phosphothreonine. Low complexity-rich tracts occupy residues 445–485 (PAPQ…QPQQ), 498–514 (QQQQPQQQQAQTQQQFQ), and 576–606 (PQAQPATAPQAAAAQEPQIQAPARQQPKVQT). Phosphothreonine is present on threonine 607. Over residues 614-628 (GQKVGSLTPPSSPKT) the composition is skewed to polar residues. A Phosphoserine modification is found at serine 619. Position 621 is a phosphothreonine (threonine 621). Phosphoserine occurs at positions 624, 625, 638, and 651. The residue at position 654 (threonine 654) is a Phosphothreonine. Residues 664–677 (ASLSKSKSATTTPS) show a composition bias toward low complexity. Residues 664-702 (ASLSKSKSATTTPSGSPRTSQQNVSNASEGSTWNPFDDD) are disordered. Over residues 678–697 (GSPRTSQQNVSNASEGSTWN) the composition is skewed to polar residues. Phosphoserine occurs at positions 732, 847, 938, and 939. The interval 824–961 (EKADAAVESL…SLLLVDQLID (138 aa)) is clathrin-binding domain (CBD). Disordered stretches follow at residues 839 to 860 (PPVAQRLPSHTESVTSNRTDSL) and 925 to 946 (LITKNTQGGHSRNSSGSSESSL). Residues 846–860 (PSHTESVTSNRTDSL) are compositionally biased toward polar residues. Low complexity predominate over residues 932 to 945 (GGHSRNSSGSSESS).

Belongs to the protein kinase superfamily. Ser/Thr protein kinase family. In terms of assembly, interacts (via CBD domain) with clathrin. Interacts with AP-2 complex. Interacts with NUMB. Interacts with alpha-adaptin. Interacts with EPS15. Interacts with membrane-bound activated NOTCH1 but not with the inactive full-length form of NOTCH1. Preferentially interacts with monoubiquitinated activated NOTCH1 compared to the non-ubiquitinated form. Autophosphorylated.

The protein resides in the cell membrane. It localises to the membrane. It is found in the clathrin-coated pit. The protein localises to the presynapse. It catalyses the reaction L-seryl-[protein] + ATP = O-phospho-L-seryl-[protein] + ADP + H(+). The catalysed reaction is L-threonyl-[protein] + ATP = O-phospho-L-threonyl-[protein] + ADP + H(+). Its activity is regulated as follows. Stimulated by clathrin. Regulates clathrin-mediated endocytosis by phosphorylating the AP2M1/mu2 subunit of the adaptor protein complex 2 (AP-2) which ensures high affinity binding of AP-2 to cargo membrane proteins during the initial stages of endocytosis. Preferentially, may phosphorylate substrates on threonine residues. Regulates phosphorylation of other AP-2 subunits as well as AP-2 localization and AP-2-mediated internalization of ligand complexes. Phosphorylates NUMB and regulates its cellular localization, promoting NUMB localization to endosomes. Binds to and stabilizes the activated form of NOTCH1, increases its localization in endosomes and regulates its transcriptional activity. This is AP2-associated protein kinase 1 (Aak1) from Rattus norvegicus (Rat).